Reading from the N-terminus, the 301-residue chain is Porphobilinogen deaminase (301 aa).

At Cys-240 the chain carries S-(dipyrrolylmethanemethyl)cysteine.

The protein belongs to the HMBS family. As to quaternary structure, monomer. The cofactor is dipyrromethane.

The enzyme catalyses 4 porphobilinogen + H2O = hydroxymethylbilane + 4 NH4(+). The protein operates within porphyrin-containing compound metabolism; protoporphyrin-IX biosynthesis; coproporphyrinogen-III from 5-aminolevulinate: step 2/4. Its function is as follows. Tetrapolymerization of the monopyrrole PBG into the hydroxymethylbilane pre-uroporphyrinogen in several discrete steps. The sequence is that of Porphobilinogen deaminase from Clostridioides difficile (strain 630) (Peptoclostridium difficile).